The chain runs to 242 residues: B-box zinc finger protein 20 (242 aa).

Zn(2+)-binding residues include C5, C8, C28, H33, C58, C61, C81, and H91. A B box-type 1; atypical zinc finger spans residues 5–47; that stretch reads CAVCDKEEASVFCCADEAALCNGCDRHVHFANKLAGKHLRFSL. A B box-type 2; atypical zinc finger spans residues 58 to 100; the sequence is CDICGERRALLFCQEDRAILCRECDIPIHQANEHTKKHNRFLL. The interval 112 to 153 is disordered; sequence YPRASNSNSAAAFGRAKTRPKSVSSEVPSSASNEVFTSSSST. Low complexity predominate over residues 133–153; the sequence is SVSSEVPSSASNEVFTSSSST.

As to quaternary structure, interacts with MED25 and COP1. COP1-mediated ubiquitination and subsequent proteasomal degradation of BBX20 occurs in the dark.

It localises to the nucleus. Its function is as follows. Acts as a positive regulator of seedling photomorphogenesis. Plays a negative role in brassinosteroid responses. The protein is B-box zinc finger protein 20 of Arabidopsis thaliana (Mouse-ear cress).